A 756-amino-acid polypeptide reads, in one-letter code: Catalase-peroxidase (756 aa).

Positions 91 to 244 (WHSAGTYRTG…LAAVQMGLIY (154 aa)) form a cross-link, tryptophyl-tyrosyl-methioninium (Trp-Tyr) (with M-270). Catalysis depends on His-92, which acts as the Proton acceptor. Positions 198-230 (AQKKMQQPGDGTLVAEPENHANEESRTASGERN) are disordered. Residues 214–223 (PENHANEESR) show a composition bias toward basic and acidic residues. Positions 244-270 (YVNPEGPEGVPDPVASAKDIRETFGRM) form a cross-link, tryptophyl-tyrosyl-methioninium (Tyr-Met) (with W-91). Residue His-285 coordinates heme b. Residues 371–390 (KNGAGAGKIPDAHDPSKRHA) form a disordered region.

The protein belongs to the peroxidase family. Peroxidase/catalase subfamily. As to quaternary structure, homodimer or homotetramer. The cofactor is heme b. Formation of the three residue Trp-Tyr-Met cross-link is important for the catalase, but not the peroxidase activity of the enzyme.

It catalyses the reaction H2O2 + AH2 = A + 2 H2O. It carries out the reaction 2 H2O2 = O2 + 2 H2O. Bifunctional enzyme with both catalase and broad-spectrum peroxidase activity. The protein is Catalase-peroxidase of Pseudomonas savastanoi pv. phaseolicola (strain 1448A / Race 6) (Pseudomonas syringae pv. phaseolicola (strain 1448A / Race 6)).